Consider the following 337-residue polypeptide: Viral cathepsin (337 aa).

The N-terminal stretch at 1–19 (MTLLMIFTILLVASSQIEG) is a signal peptide. Positions 20 to 126 (HLKFDIHDAQ…DAPPDVHDEL (107 aa)) are cleaved as a propeptide — activation peptide. 3 cysteine pairs are disulfide-bonded: Cys-147/Cys-188, Cys-181/Cys-221, and Cys-276/Cys-324. Cys-150 is a catalytic residue. Residue Asn-172 is glycosylated (N-linked (GlcNAc...) asparagine; by host). Catalysis depends on residues His-283 and Asn-303.

Belongs to the peptidase C1 family. Post-translationally, synthesized as an inactive proenzyme and activated by proteolytic removal of the inhibitory propeptide.

The catalysed reaction is Endopeptidase of broad specificity, hydrolyzing substrates of both cathepsin L and cathepsin B.. Functionally, cysteine protease that plays an essential role in host liquefaction to facilitate horizontal transmission of the virus. May participate in the degradation of foreign protein expressed by the baculovirus system. The protein is Viral cathepsin (VCATH) of Adoxophyes honmai (Smaller tea tortrix moth).